The following is a 547-amino-acid chain: Phospholipase DDHD1 (547 aa).

Ser-184 is an active-site residue. Positions 258–533 constitute a DDHD domain; it reads LKFKVENFFC…ALFLLTFMYK (276 aa). Phosphoserine is present on Ser-370. The disordered stretch occupies residues 414–448; that stretch reads RSSASQPSEPSKDSLEDDKKPSASPSTTTVATQTL. The segment covering 423–434 has biased composition (basic and acidic residues); it reads PSKDSLEDDKKP. Low complexity predominate over residues 435 to 448; the sequence is SASPSTTTVATQTL.

It belongs to the PA-PLA1 family. As to quaternary structure, forms homooligomers and, to a much smaller extent, heterooligomers with DDHD2. Interacts with SEC23A and SEC24C. In terms of tissue distribution, predominantly expressed in testis, in round and elongating spermatids, but not in spermatocytes (at protein level). Also expressed in the brain, and at lower levels in other tissues such as thymus and lung (at protein level).

It is found in the cytoplasm. It carries out the reaction a 1,2-diacyl-sn-glycero-3-phosphate + H2O = a 2-acyl-sn-glycerol 3-phosphate + a fatty acid + H(+). The catalysed reaction is a 1,2-diacyl-sn-glycero-3-phospho-(1D-myo-inositol) + H2O = a 2-acyl-sn-glycero-3-phospho-D-myo-inositol + a fatty acid + H(+). The enzyme catalyses 1-octadecanoyl-2-(5Z,8Z,11Z,14Z-eicosatetraenoyl)-sn-glycero-3-phospho-(1D-myo-inositol) + H2O = 2-(5Z,8Z,11Z,14Z-eicosatetraenoyl)-sn-glycero-3-phospho-(1D-myo-inositol) + octadecanoate + H(+). It catalyses the reaction a 1-acyl-2-(5Z,8Z,11Z,14Z-eicosatetraenoyl)-sn-glycero-3-phospho-(1D-myo-inositol) + H2O = 2-(5Z,8Z,11Z,14Z-eicosatetraenoyl)-sn-glycero-3-phospho-(1D-myo-inositol) + a fatty acid + H(+). It carries out the reaction 1,2-dihexadecanoyl-sn-glycero-3-phospho-(1D-myo-inositol) + H2O = 2-hexadecanoyl-sn-glycero-3-phospho-(1D-myo-inositol) + hexadecanoate + H(+). The catalysed reaction is a 1-acyl-2-(5Z,8Z,11Z,14Z)-eicosatetraenoyl-sn-glycero-3-phosphate + H2O = 2-(5Z,8Z,11Z,14Z-eicosatetraenoyl)-sn-glycero-3-phosphate + a fatty acid + H(+). The enzyme catalyses 1-(9Z-octadecenoyl)-2-(7Z,10Z,13Z,16Z,19Z-docosapentaenoyl)-sn-glycero-3-phospho-1D-myo-inositol + H2O = 2-(7Z,10Z,13Z,16Z,19Z-docosapentaenoyl)-sn-glycero-3-phospho-1D-myo-inositol + (9Z)-octadecenoate + H(+). It catalyses the reaction 1-(9Z-octadecenoyl)-2-(5Z,8Z,11Z,14Z-eicosatetraenoyl)-sn-glycero-3-phospho-1D-myo-inositol + H2O = 2-(5Z,8Z,11Z,14Z-eicosatetraenoyl)-sn-glycero-3-phospho-(1D-myo-inositol) + (9Z)-octadecenoate + H(+). It carries out the reaction 1,2-di-(9Z-octadecenoyl)-sn-glycero-3-phospho-1D-myo-inositol + H2O = 2-(9Z-octadecenoyl)-sn-glycero-3-phospho-1D-myo-inositol + (9Z)-octadecenoate + H(+). The catalysed reaction is 1-(9Z-octadecenoyl)-2-(8Z,11Z,14Z-eicosatrienoyl)-sn-glycero-3-phospho-1D-myo-inositol + H2O = 2-(8Z,11Z,14Z-eicosatrienoyl)-sn-glycero-3-phospho-1D-myo-inositol + (9Z)-octadecenoate + H(+). The enzyme catalyses 1,2-di-(9Z-octadecenoyl)-sn-glycero-3-phosphate + H2O = 2-(9Z-octadecenoyl)-sn-glycero-3-phosphate + (9Z)-octadecenoate + H(+). It catalyses the reaction 1-hexadecanoyl-2-(9Z-octadecenoyl)-sn-glycero-3-phosphate + H2O = 2-(9Z-octadecenoyl)-sn-glycero-3-phosphate + hexadecanoate + H(+). It carries out the reaction 1-hexadecanoyl-2-(9Z-octadecenoyl)-sn-glycero-3-phospho-L-serine + H2O = 2-(9Z-octadecenoyl)-sn-glycero-3-phospho-L-serine + hexadecanoate + H(+). The catalysed reaction is 1,2-di-(5Z,8Z,11Z,14Z)-eicosatetraenoyl-sn-glycero-3-phosphate + H2O = 2-(5Z,8Z,11Z,14Z-eicosatetraenoyl)-sn-glycero-3-phosphate + (5Z,8Z,11Z,14Z)-eicosatetraenoate + H(+). The enzyme catalyses 1-octadecanoyl-2-(5Z,8Z,11Z,14Z-eicosatetraenoyl)-sn-glycero-3-phosphate + H2O = 2-(5Z,8Z,11Z,14Z-eicosatetraenoyl)-sn-glycero-3-phosphate + octadecanoate + H(+). It catalyses the reaction a 1,2-diacyl-sn-glycero-3-phospho-L-serine + H2O = a 2-acyl-sn-glycero-3-phospho-L-serine + a fatty acid + H(+). It carries out the reaction a 1,2-diacyl-sn-glycero-3-phosphocholine + H2O = a 2-acyl-sn-glycero-3-phosphocholine + a fatty acid + H(+). The catalysed reaction is 1,2-di-(9Z-octadecenoyl)-sn-glycero-3-phosphocholine + H2O = (9Z-octadecenoyl)-sn-glycero-3-phosphocholine + (9Z)-octadecenoate + H(+). The enzyme catalyses a 1,2-diacyl-sn-glycero-3-phosphoethanolamine + H2O = a 2-acyl-sn-glycero-3-phosphoethanolamine + a fatty acid + H(+). It catalyses the reaction a 1,2-diacyl-sn-glycero-3-phospho-(1'-sn-glycerol) + H2O = 2-acyl-sn-glycero-3-phospho-(1'-sn-glycerol) + a fatty acid + H(+). It carries out the reaction 1-hexadecanoyl-2-(9Z-octadecenoyl)-sn-glycero-3-phospho-(1'-sn-glycerol) + H2O = 2-(9Z-octadecenoyl)-sn-glycero-3-phospho-(1'-sn-glycerol) + hexadecanoate + H(+). The catalysed reaction is 1-acyl-2-(5Z,8Z,11Z,14Z-eicosatetraenoyl)-sn-glycero-3-phosphocholine + H2O = 2-(5Z,8Z,11Z,14Z)-eicosatetraenoyl-sn-glycero-3-phosphocholine + a fatty acid + H(+). The enzyme catalyses 1-acyl-2-(5Z,8Z,11Z,14Z)-eicosatetraenoyl-sn-glycero-3-phosphoethanolamine + H2O = 2-(5Z,8Z,11Z,14Z)-eicosatetraenoyl-sn-glycero-3-phosphoethanolamine + a fatty acid + H(+). It functions in the pathway phospholipid metabolism; phosphatidylinositol metabolism. Phospholipase A1 (PLA1) that hydrolyzes ester bonds at the sn-1 position of glycerophospholipids producing a free fatty acid and a lysophospholipid. Prefers phosphatidate (1,2-diacyl-sn-glycero-3-phosphate, PA) as substrate in vitro, but can efficiently hydrolyze phosphatidylinositol (1,2-diacyl-sn-glycero-3-phospho-(1D-myo-inositol), PI), as well as a range of other glycerophospholipid substrates such as phosphatidylcholine (1,2-diacyl-sn-glycero-3-phosphocholine, PC), phosphatidylethanolamine (1,2-diacyl-sn-glycero-3-phosphoethanolamine, PE), phosphatidylserine (1,2-diacyl-sn-glycero-3-phospho-L-serine, PS) and phosphatidylglycerol (1,2-diacyl-sn-glycero-3-phospho-(1'-sn-glycerol), PG). Involved in the regulation of the endogenous content of polyunsaturated PI and PS lipids in the nervous system. Changes in these lipids extend to downstream metabolic products like PI phosphates PIP and PIP2, which play fundamental roles in cell biology. Regulates mitochondrial morphology. These dynamic changes may be due to PA hydrolysis at the mitochondrial surface. May play a regulatory role in spermatogenesis or sperm function. This chain is Phospholipase DDHD1, found in Mus musculus (Mouse).